We begin with the raw amino-acid sequence, 152 residues long: Transposase for insertion sequence element IS200 (152 aa).

Mg(2+) contacts are provided by H61 and H63. The active-site Nucleophile is Y125. Q129 contributes to the Mg(2+) binding site.

The protein belongs to the transposase 17 family. As to quaternary structure, homodimer. The cofactor is Mg(2+).

Functionally, transposase responsible for transposition of the IS200 insertion sequence (IS) element. Transposition occurs in 2 main steps, excision from the donor DNA 'top strand' into a single strand circle and its subsequent reinsertion into the DNA target. This increases the copy number of the IS. The chain is Transposase for insertion sequence element IS200 (tnpA1) from Salmonella typhi.